A 310-amino-acid polypeptide reads, in one-letter code: Imidazolonepropionase (310 aa).

Residues tyrosine 42 and histidine 75 each coordinate 4-imidazolone-5-propanoate. Tyrosine 42 is an N-formimidoyl-L-glutamate binding site. Histidine 140 serves as a coordination point for Fe(3+). Histidine 140 contacts Zn(2+). Residue glutamate 143 coordinates 4-imidazolone-5-propanoate. Position 215 (aspartate 215) interacts with Fe(3+). Zn(2+) is bound at residue aspartate 215. The N-formimidoyl-L-glutamate site is built by asparagine 217 and glycine 219. Serine 220 lines the 4-imidazolone-5-propanoate pocket.

It belongs to the metallo-dependent hydrolases superfamily. HutI family. Zn(2+) serves as cofactor. Requires Fe(3+) as cofactor.

The protein resides in the cytoplasm. The enzyme catalyses 4-imidazolone-5-propanoate + H2O = N-formimidoyl-L-glutamate. The protein operates within amino-acid degradation; L-histidine degradation into L-glutamate; N-formimidoyl-L-glutamate from L-histidine: step 3/3. Functionally, catalyzes the hydrolytic cleavage of the carbon-nitrogen bond in imidazolone-5-propanoate to yield N-formimidoyl-L-glutamate. It is the third step in the universal histidine degradation pathway. The polypeptide is Imidazolonepropionase (hutI) (Streptococcus gordonii).